Consider the following 196-residue polypeptide: RNA-free ribonuclease P (196 aa).

The protein belongs to the HARP family.

It carries out the reaction Endonucleolytic cleavage of RNA, removing 5'-extranucleotides from tRNA precursor.. Functionally, RNA-free RNase P that catalyzes the removal of the 5'-leader sequence from pre-tRNA to produce the mature 5'-terminus. This chain is RNA-free ribonuclease P, found in Thermodesulfovibrio yellowstonii (strain ATCC 51303 / DSM 11347 / YP87).